A 277-amino-acid chain; its full sequence is Putative phosphoenolpyruvate synthase regulatory protein (277 aa).

Residue 152–159 (GVSRCGKT) coordinates ADP.

Belongs to the pyruvate, phosphate/water dikinase regulatory protein family. PSRP subfamily.

The enzyme catalyses [pyruvate, water dikinase] + ADP = [pyruvate, water dikinase]-phosphate + AMP + H(+). It catalyses the reaction [pyruvate, water dikinase]-phosphate + phosphate + H(+) = [pyruvate, water dikinase] + diphosphate. Functionally, bifunctional serine/threonine kinase and phosphorylase involved in the regulation of the phosphoenolpyruvate synthase (PEPS) by catalyzing its phosphorylation/dephosphorylation. The protein is Putative phosphoenolpyruvate synthase regulatory protein of Chromohalobacter salexigens (strain ATCC BAA-138 / DSM 3043 / CIP 106854 / NCIMB 13768 / 1H11).